The primary structure comprises 1061 residues: Ceruloplasmin (1061 aa).

A signal peptide spans 1 to 19 (MKFLLLSTFIFLYSSLALA). Plastocyanin-like domains lie at 20-199 (RDKH…LILC), 208-356 (KEKN…VRDC), 369-555 (HVRH…MKIC), 565-713 (RQKD…VNQC), 725-895 (GERT…LIVC), and 903-1057 (FSPK…VEQE). Tyr55, Gly64, and Tyr67 together coordinate Na(+). Cu(2+) is bound by residues His120 and His122. His120 is an O2 binding site. Lys128 provides a ligand contact to Ca(2+). N-linked (GlcNAc...) asparagine glycosylation occurs at Asn138. Positions 143, 146, and 147 each coordinate Ca(2+). Cys173 and Cys199 are oxidised to a cystine. Cu(2+) contacts are provided by His179 and His181. Position 179 (His179) interacts with O2. An N-linked (GlcNAc...) asparagine glycan is attached at Asn226. Ser255 contributes to the Na(+) binding site. The cysteines at positions 275 and 356 are disulfide-linked. Cu(2+) contacts are provided by His294, Cys337, and His342. Asn396 is a glycosylation site (N-linked (GlcNAc...) asparagine). Na(+) is bound by residues Phe407, Gly416, and Tyr419. An intrachain disulfide couples Cys529 to Cys555. Asn583 carries N-linked (GlcNAc...) asparagine glycosylation. Na(+) is bound at residue Ser612. Cys632 and Cys713 form a disulfide bridge. His651, Cys694, His699, and Met704 together coordinate Cu(2+). Cys694 functions as the Nucleophile; for glutathione peroxidase activity in the catalytic mechanism. N-linked (GlcNAc...) asparagine glycosylation is present at Asn757. The Na(+) site is built by Phe762, Gly771, and Tyr774. A disulfide bridge connects residues Cys869 and Cys895. The N-linked (GlcNAc...) asparagine glycan is linked to Asn921. Ser950 provides a ligand contact to Na(+). Positions 989, 992, 994, 1034, 1035, 1036, 1040, and 1045 each coordinate Cu(2+). The O2 site is built by His992 and His994. Residue His1036 participates in O2 binding.

The protein belongs to the multicopper oxidase family. In terms of assembly, found in a complex with MPO and LTF; interacts directly with MPO and LTF, which allows Fe(3+) incorporation into LTF, activation of CP ferroxidase activity and protection of CP antioxidant properties by MPO. Cu(2+) is required as a cofactor. As to expression, expressed in many tissues, including liver, eye and brain.

Its subcellular location is the secreted. It carries out the reaction 4 Fe(2+) + O2 + 4 H(+) = 4 Fe(3+) + 2 H2O. The enzyme catalyses 4 Cu(+) + O2 + 4 H(+) = 4 Cu(2+) + 2 H2O. It catalyses the reaction a hydroperoxide + 2 glutathione = an alcohol + glutathione disulfide + H2O. The catalysed reaction is 4 nitric oxide + O2 + 2 H2O = 4 nitrite + 4 H(+). It carries out the reaction 2 glutathione + H2O2 = glutathione disulfide + 2 H2O. Multifunctional blue, copper-binding (6-7 atoms per molecule) glycoprotein. It has ferroxidase activity oxidizing Fe(2+) to Fe(3+) without releasing radical oxygen species. It is involved in iron transport across the cell membrane. Copper ions provide a large number of enzymatic activites. Oxidizes highly toxic ferrous ions to the ferric state for further incorporation onto apo-transferrins, catalyzes Cu(+) oxidation and promotes the oxidation of biogenic amines such as norepinephrin and serotonin. Provides Cu(2+) ions for the ascorbate-mediated deaminase degradation of the heparan sulfate chains of GPC1. Has glutathione peroxidase-like activity, can remove both hydrogen peroxide and lipid hydroperoxide in the presence of thiols. Also shows NO-oxidase and NO2 synthase activities that determine endocrine NO homeostasis. This is Ceruloplasmin (Cp) from Mus musculus (Mouse).